The primary structure comprises 139 residues: MKIIFVCSGNTCRSPLAESIAKSLLPHDSIASRGLFAVEGQAISKESLELIHKYDLPEPSRAQAFHIDDLDADIILTMTQAHKDLIFSMYGRQSNVFTLNEYVGDTQEIDDPFGGSFDVYEQTYTKIYDLVDKIKFKHE.

Catalysis depends on cysteine 7, which acts as the Nucleophile. Arginine 13 is an active-site residue. Aspartate 111 (proton donor) is an active-site residue.

Belongs to the low molecular weight phosphotyrosine protein phosphatase family.

It carries out the reaction O-phospho-L-tyrosyl-[protein] + H2O = L-tyrosyl-[protein] + phosphate. Its function is as follows. Dephosphorylates the phosphotyrosine-containing proteins. The sequence is that of Low molecular weight protein-tyrosine-phosphatase PtpB (ptpB) from Staphylococcus epidermidis (strain ATCC 35984 / DSM 28319 / BCRC 17069 / CCUG 31568 / BM 3577 / RP62A).